The primary structure comprises 162 residues: Ribosomal RNA large subunit methyltransferase H (162 aa).

S-adenosyl-L-methionine is bound by residues L78, G109, and 128-133 (LSALTL).

It belongs to the RNA methyltransferase RlmH family. In terms of assembly, homodimer.

It is found in the cytoplasm. It carries out the reaction pseudouridine(1915) in 23S rRNA + S-adenosyl-L-methionine = N(3)-methylpseudouridine(1915) in 23S rRNA + S-adenosyl-L-homocysteine + H(+). Specifically methylates the pseudouridine at position 1915 (m3Psi1915) in 23S rRNA. In Psychrobacter cryohalolentis (strain ATCC BAA-1226 / DSM 17306 / VKM B-2378 / K5), this protein is Ribosomal RNA large subunit methyltransferase H.